We begin with the raw amino-acid sequence, 369 residues long: 3,7-dimethylxanthine N-methyltransferase TCS1 (369 aa).

Residue Tyr24 participates in S-adenosyl-L-homocysteine binding. Thr31 contributes to the caffeine binding site. 6 residues coordinate S-adenosyl-L-homocysteine: Cys66, Asn71, Asp103, Leu104, Ser138, and Phe139. The caffeine site is built by Tyr156, His159, and Trp160. Asn177 lines the Mg(2+) pocket. Arg225 provides a ligand contact to caffeine. 3 residues coordinate Mg(2+): Asp263, Phe265, and Asn266. Position 321 (Phe321) interacts with caffeine.

The protein belongs to the methyltransferase superfamily. Type-7 methyltransferase family. The cofactor is Mg(2+). Expressed in young leaves and flowers.

It catalyses the reaction 7-methylxanthine + S-adenosyl-L-methionine = theobromine + S-adenosyl-L-homocysteine + H(+). It carries out the reaction theobromine + S-adenosyl-L-methionine = caffeine + S-adenosyl-L-homocysteine + H(+). The enzyme catalyses 1,7-dimethylxanthine + S-adenosyl-L-methionine = caffeine + S-adenosyl-L-homocysteine + H(+). Its pathway is alkaloid biosynthesis. Its function is as follows. Involved in the biosynthesis of caffeine. Catalyzes the conversion of 7-methylxanthine (7mX) to theobromine and of theobromine to caffeine. Has 3-N- and 1-N-methylation activity. The chain is 3,7-dimethylxanthine N-methyltransferase TCS1 from Camellia sinensis (Tea plant).